The sequence spans 451 residues: Trigger factor (451 aa).

The 86-residue stretch at 165–250 (DDKLTIDFEG…LRQIQAREAL (86 aa)) folds into the PPIase FKBP-type domain.

It belongs to the FKBP-type PPIase family. Tig subfamily.

The protein localises to the cytoplasm. The catalysed reaction is [protein]-peptidylproline (omega=180) = [protein]-peptidylproline (omega=0). Involved in protein export. Acts as a chaperone by maintaining the newly synthesized protein in an open conformation. Functions as a peptidyl-prolyl cis-trans isomerase. The protein is Trigger factor of Helicobacter pylori (strain Shi470).